The sequence spans 258 residues: Enterotoxin type G (258 aa).

An N-terminal signal peptide occupies residues 1–25 (MKKLSTVIIILILEIVFHNMNYVNA). A disulfide bond links C116 and C133.

The protein belongs to the staphylococcal/streptococcal toxin family.

The protein resides in the secreted. Functionally, staphylococcal enterotoxins cause the intoxication staphylococcal food poisoning syndrome. The illness is characterized by high fever, hypotension, diarrhea, shock, and in some cases death. This is Enterotoxin type G (entG) from Staphylococcus aureus (strain N315).